The sequence spans 122 residues: Acidic phospholipase A2 A' (122 aa).

Intrachain disulfides connect Cys-26/Cys-115, Cys-28/Cys-44, Cys-43/Cys-95, Cys-49/Cys-122, Cys-50/Cys-88, Cys-57/Cys-81, and Cys-75/Cys-86. Residues Tyr-27, Gly-29, and Gly-31 each coordinate Ca(2+). His-47 is an active-site residue. Asp-48 serves as a coordination point for Ca(2+). Residue Asp-89 is part of the active site.

The protein belongs to the phospholipase A2 family. Group II subfamily. D49 sub-subfamily. Ca(2+) serves as cofactor. Expressed by the venom gland.

The protein resides in the secreted. It catalyses the reaction a 1,2-diacyl-sn-glycero-3-phosphocholine + H2O = a 1-acyl-sn-glycero-3-phosphocholine + a fatty acid + H(+). Functionally, PLA2 catalyzes the calcium-dependent hydrolysis of the 2-acyl groups in 3-sn-phosphoglycerides. The protein is Acidic phospholipase A2 A' of Gloydius halys (Chinese water mocassin).